Here is a 75-residue protein sequence, read N- to C-terminus: Supwaprin-a (75 aa).

Positions 1–24 (MSSGGLLLLLGFLTLWAELTPVSG) are cleaved as a signal peptide. Residues 27–72 (RPKKPGLCPPRPQKPPCVRECKNDWSCPGEQKCCRYGCIFECRDPI) form the WAP domain. 4 cysteine pairs are disulfide-bonded: C34-C60, C43-C64, C47-C59, and C53-C68.

Belongs to the venom waprin family. In terms of tissue distribution, expressed by the venom gland.

Its subcellular location is the secreted. Its function is as follows. Damages membranes of susceptible bacteria. Has no hemolytic activity. Not toxic to mice. Does not inhibit the proteinases elastase and cathepsin G. This chain is Supwaprin-a, found in Austrelaps superbus (Lowland copperhead snake).